The chain runs to 249 residues: Acidic leucine-rich nuclear phosphoprotein 32 family member A (249 aa).

Threonine 15 bears the Phosphothreonine mark. At serine 17 the chain carries Phosphoserine. 4 LRR repeats span residues 18-38 (DVKE…EGLT), 43-64 (ELEF…PKLN), 65-87 (KLKK…AEKC), and 89-110 (NLTH…EPLK). The LRRCT domain occupies 123 to 161 (CEVTNLNDYRENVFKLLPQLTYLDGYDRDDKEAPDSDAE). Positions 147-156 (GYDRDDKEAP) are enriched in basic and acidic residues. Residues 147–249 (GYDRDDKEAP…EPEDEGEDDD (103 aa)) form a disordered region. The interval 150-174 (RDDKEAPDSDAEGYVEGLDDDEEDE) is necessary for tumor-suppressive function. Residues 157-230 (DSDAEGYVEG…DEEDEEELGE (74 aa)) show a composition bias toward acidic residues. Phosphoserine occurs at positions 158 and 204. The interaction with E4F1 stretch occupies residues 165–249 (EGLDDDEEDE…EPEDEGEDDD (85 aa)).

Belongs to the ANP32 family. As to quaternary structure, component of the SET complex, composed of at least ANP32A, APEX1, HMGB2, NME1, SET and TREX1. Directly interacts with SET. Interacts with ATXN1/SCA1. Interacts with MAP1B. Interacts with ELAVL1. Part of the INHAT (inhibitor of histone acetyltransferases) complex. Interacts with E4F1. The N-terminus is blocked. In terms of processing, phosphorylated on serine residues, at least in part by casein kinase 2/CK2. Post-translationally, some glutamate residues are glycylated by TTLL8. This modification occurs exclusively on glutamate residues and results in a glycine chain on the gamma-carboxyl group. In terms of tissue distribution, widely distributed in the central nervous system, with an abundant expression in the cerebellum.

The protein resides in the nucleus. It is found in the cytoplasm. It localises to the endoplasmic reticulum. In terms of biological role, multifunctional protein that is involved in the regulation of many processes including tumor suppression, apoptosis, cell cycle progression or transcription. Promotes apoptosis by favouring the activation of caspase-9/CASP9 and allowing apoptosome formation. In addition, plays a role in the modulation of histone acetylation and transcription as part of the INHAT (inhibitor of histone acetyltransferases) complex. Inhibits the histone-acetyltranferase activity of EP300/CREBBP (CREB-binding protein) and EP300/CREBBP-associated factor by histone masking. Preferentially binds to unmodified histone H3 and sterically inhibiting its acetylation and phosphorylation leading to cell growth inhibition. Participates in other biochemical processes such as regulation of mRNA nuclear-to-cytoplasmic translocation and stability by its association with ELAVL1 (Hu-antigen R). Plays a role in E4F1-mediated transcriptional repression as well as inhibition of protein phosphatase 2A. This Bos taurus (Bovine) protein is Acidic leucine-rich nuclear phosphoprotein 32 family member A (ANP32A).